Reading from the N-terminus, the 142-residue chain is Taurine up-regulated 1 protein (142 aa).

A signal peptide spans 1-40 (MARPPPLPGLVGRRSGRAVDRAIGWRLFLLLWHPALGAQA). Residues 41-123 (RPPRRAPGGR…ARTQLEGQEG (83 aa)) are Extracellular-facing. The chain crosses the membrane as a helical span at residues 124–140 (AGGWLVVGFLLCLFLLM). Topologically, residues 141–142 (PP) are cytoplasmic.

As to expression, widely expressed in the adult with highest levels in placenta and testis. Also expressed in a number of embryonic tissues at multiple embryonic stages.

The protein localises to the nucleus membrane. The protein resides in the mitochondrion membrane. Its subcellular location is the cytoplasm. The protein is Taurine up-regulated 1 protein of Mus musculus (Mouse).